The sequence spans 439 residues: Perilipin-3 (439 aa).

Residues 1 to 19 show a composition bias toward low complexity; that stretch reads MFASETEASASSTQVTTEE. The interval 1-26 is disordered; it reads MFASETEASASSTQVTTEEPVQQPSV. Position 66 is an N6-acetyllysine (Lys66). Ser92 bears the Phosphoserine mark. Lys123 participates in a covalent cross-link: Glycyl lysine isopeptide (Lys-Gly) (interchain with G-Cter in SUMO1). Ser131 is subject to Phosphoserine. Thr175 carries the phosphothreonine modification. Phosphoserine occurs at positions 180 and 184. A Phosphothreonine modification is found at Thr221. 2 positions are modified to phosphoserine: Ser222 and Ser246. Coiled-coil stretches lie at residues 254–282 and 358–381; these read RAYE…QALS and AHVK…FSGM. At Tyr256 the chain carries Phosphotyrosine.

This sequence belongs to the perilipin family. In terms of assembly, homooligomer. Interacts with M6PR (via the cytoplasmic domain). Interacts with IGF2R (via the cytoplasmic domain). Post-translationally, phosphorylation at Tyr-256 by isoform 1 of CHKA (CHKalpha2) promotes dissociation from lipid droplets: dissociation is followed by recruitment of autophagosome machinery to lipid droplets and subsequent lipid droplet lipolysis.

The protein resides in the lipid droplet. Its subcellular location is the endosome membrane. It localises to the cytoplasm. Its function is as follows. Structural component of lipid droplets, which is required for the formation and maintenance of lipid storage droplets. Required for the transport of mannose 6-phosphate receptors (MPR) from endosomes to the trans-Golgi network. The sequence is that of Perilipin-3 (PLIN3) from Sus scrofa (Pig).